Consider the following 426-residue polypeptide: MKLQKPKGTQDILPGDAAKWQYVESVARDTFSQYNYGEIRTPMFEHYEVISRSVGDTTDIVTKEMYDFYDKGDRHITLRPEGTAPVVRSYVENKLFAPEVQKPVKLYYIGSMFRYERPQAGRLREFHQIGVECFGAANPATDVETIAMAYHLFEKLGIKDVTLHLNSLGSPESRSAYRQALIDYLTPMRDQLSKDSQRRLDENPLRVLDSKEKEDKLAVEKAPSILDYLDEESQAHFEAVKAMLEALDIPYVIDTNMVRGLDYYNHTIFEFITSVEGSDLTICAGGRYDSLVGYFGGPETPGFGFGLGLERLLMVIEKQGITLPIETEMDVYLAVLGDGANSKALELVQAIRRQGFTAERDYLGRKIKAQFKSADTFKAKLVMTLGESEVEAGKAVIKNNRSRQEVEVSFEDMMTNFANISEQLLS.

This sequence belongs to the class-II aminoacyl-tRNA synthetase family. Homodimer.

Its subcellular location is the cytoplasm. The enzyme catalyses tRNA(His) + L-histidine + ATP = L-histidyl-tRNA(His) + AMP + diphosphate + H(+). The sequence is that of Histidine--tRNA ligase from Streptococcus pyogenes serotype M3 (strain ATCC BAA-595 / MGAS315).